The chain runs to 741 residues: 2-5A-dependent ribonuclease (741 aa).

Residues 1 to 21 (MESRDHNNPQEGPTSSSGRRA) form a disordered region. Positions 9 to 18 (PQEGPTSSSG) are enriched in polar residues. ANK repeat units lie at residues 24–53 (EDNH…NVNF), 58–87 (GGWT…DPVL), 91–120 (NGAT…DVNE), 124–153 (YGFT…NVNL), 167–197 (GGAT…DVNA), 201–234 (MGRN…DVNV), 238–268 (RGKT…EIND), 272–301 (DGKT…STDC), and 303–329 (DLVM…KEDF). 2-5A binding (P-loop) stretches follow at residues 229–242 (GADV…GKTP) and 253–275 (GLVQ…DGKT). Positions 365–586 (IDEKYKIADT…LSDLLGHPFF (222 aa)) constitute a Protein kinase domain. The segment at 395 to 444 (CEGSPRAQREVSCLQSSRENSHLVTFYGSESHRGHLFVCVTLCEQTLEAC) adopts a C6-type; atypical zinc-finger fold. The KEN domain occupies 589-723 (WESRYRTLRN…KHFPQTHSPN (135 aa)). Lys-684 carries the N6-acetyllysine modification. The interval 715-741 (HFPQTHSPNKPQCDGAGGASGLASPGC) is disordered.

Belongs to the protein kinase superfamily. Monomer (inactive form) or homodimer. Interacts with ABCE1; this interaction inhibits the RNASEL. Mn(2+) is required as a cofactor. It depends on Mg(2+) as a cofactor. Highly expressed in spleen and thymus followed by prostate, testis, uterus, small intestine, colon and peripheral blood leukocytes.

The protein localises to the cytoplasm. It is found in the mitochondrion. Its activity is regulated as follows. After binding to 2-5A (5'-phosphorylated 2',5'-linked oligoadenylates) the homodimerization and subsequent activation occurs. Inhibited by RNASEL inhibitor ABCE1/RLI, a cytoplasmic member of the ATP-binding cassette (ABC) transporter family. In terms of biological role, endoribonuclease that functions in the interferon (IFN) antiviral response. In INF treated and virus infected cells, RNASEL probably mediates its antiviral effects through a combination of direct cleavage of single-stranded viral RNAs, inhibition of protein synthesis through the degradation of rRNA, induction of apoptosis, and induction of other antiviral genes. RNASEL mediated apoptosis is the result of a JNK-dependent stress-response pathway leading to cytochrome c release from mitochondria and caspase-dependent apoptosis. Therefore, activation of RNASEL could lead to elimination of virus infected cells under some circumstances. In the crosstalk between autophagy and apoptosis proposed to induce autophagy as an early stress response to small double-stranded RNA and at later stages of prolonged stress to activate caspase-dependent proteolytic cleavage of BECN1 to terminate autophagy and promote apoptosis. Might play a central role in the regulation of mRNA turnover. Cleaves 3' of UpNp dimers, with preference for UU and UA sequences, to sets of discrete products ranging from between 4 and 22 nucleotides in length. In Homo sapiens (Human), this protein is 2-5A-dependent ribonuclease (RNASEL).